Consider the following 159-residue polypeptide: SsrA-binding protein (159 aa).

Belongs to the SmpB family.

The protein localises to the cytoplasm. In terms of biological role, required for rescue of stalled ribosomes mediated by trans-translation. Binds to transfer-messenger RNA (tmRNA), required for stable association of tmRNA with ribosomes. tmRNA and SmpB together mimic tRNA shape, replacing the anticodon stem-loop with SmpB. tmRNA is encoded by the ssrA gene; the 2 termini fold to resemble tRNA(Ala) and it encodes a 'tag peptide', a short internal open reading frame. During trans-translation Ala-aminoacylated tmRNA acts like a tRNA, entering the A-site of stalled ribosomes, displacing the stalled mRNA. The ribosome then switches to translate the ORF on the tmRNA; the nascent peptide is terminated with the 'tag peptide' encoded by the tmRNA and targeted for degradation. The ribosome is freed to recommence translation, which seems to be the essential function of trans-translation. This is SsrA-binding protein from Frankia casuarinae (strain DSM 45818 / CECT 9043 / HFP020203 / CcI3).